Reading from the N-terminus, the 395-residue chain is Teichoic acid D-alanyltransferase (395 aa).

Residues 1 to 6 lie on the Extracellular side of the membrane; sequence MTPYSS. Residues 7–26 traverse the membrane as a helical segment; sequence FLFFILLGILLLPTIILGLN. Residues 27 to 30 lie on the Cytoplasmic side of the membrane; it reads GKRF. Residues 31–46 traverse the membrane as a helical segment; that stretch reads QAYNMFISIIILALIF. Residues 47-50 lie on the Extracellular side of the membrane; it reads SHDL. Residues 51–76 form a helical membrane-spanning segment; sequence HGVIALCLFTIWQVLLISGYLAYRQK. Topologically, residues 77-79 are cytoplasmic; sequence ANS. The helical transmembrane segment at 80–104 threads the bilayer; sequence GFVFCGAVIASILPLFLSKIWPFLS. Over 105–120 the chain is Extracellular; that stretch reads HPQPHHPPHNLISFLG. The chain crosses the membrane as a helical span at residues 121–137; it reads ISYLTFKGVQLIMEARD. At 138-145 the chain is on the cytoplasmic side; that stretch reads GLLKEQLP. An intramembrane segment occupies 146–175; that stretch reads LHRLLYFILFFPTISSGPIDRYRRFVKDEQ. Residues 176-179 are Cytoplasmic-facing; the sequence is KAWT. The helical transmembrane segment at 180-223 threads the bilayer; it reads KEEYADLLYTGIHKIFIGFLYKFIIGYAINTYFIMNLPAITHNK. Ile-224 is a topological domain (extracellular). The helical transmembrane segment at 225-256 threads the bilayer; it reads LGNLLYMYGYSMYLFFDFAGYTMFAVGVSYIM. Residues 257–266 are Cytoplasmic-facing; sequence GIKSPENFNK. The stretch at 267–303 is an intramembrane region; that stretch reads PFISKNIKDFWNRWHMSLSFWFRDYVFMRFVFWMTKK. The Cytoplasmic portion of the chain corresponds to 304 to 308; that stretch reads KWIKN. Residues 309–328 form a helical membrane-spanning segment; it reads RMAVSNIGYFLLFMLMGVWH. His-328 is a catalytic residue. Residues 329–333 lie on the Extracellular side of the membrane; sequence GLAPQ. Residues 334–351 traverse the membrane as a helical segment; it reads YIIYGLYHAVLMTCYNFF. The Cytoplasmic portion of the chain corresponds to 352-364; that stretch reads EKWNKKYKWLPSN. Residues 365–387 traverse the membrane as a helical segment; that stretch reads RWTTILAIVITFHFVCFGFYIFS. Topologically, residues 388–395 are extracellular; that stretch reads GKPFHHHH.

The protein belongs to the membrane-bound acyltransferase family.

Its subcellular location is the cell membrane. Its pathway is cell wall biogenesis; lipoteichoic acid biosynthesis. Functionally, O-acyltransferase that catalyzes D-alanylation of both teichoic acid and lipoteichoic acid (LTA). D-alanylation of LTA plays an important role in modulating the properties of the cell wall in Gram-positive bacteria, influencing the net charge of the cell wall. Catalyzes D-alanylation from DltC carrier protein. In Bacillus subtilis (strain 168), this protein is Teichoic acid D-alanyltransferase.